A 682-amino-acid polypeptide reads, in one-letter code: Protein asunder (682 aa).

Residues 517-570 (NGARLKLSKAKDQYRLLYRELEQLIHLNATTVHHKNLLESLQSLRAAYGEAKSE) adopt a coiled-coil conformation. The span at 571 to 583 (PNSSLLRSYTESP) shows a compositional bias: polar residues. A disordered region spans residues 571–612 (PNSSLLRSYTESPHSPERLEPIPSGGSSGSNSNSLLKASKRR). The Nuclear localization signal (NLS) motif lies at 606-612 (LKASKRR).

It belongs to the Integrator subunit 13 family. As to quaternary structure, belongs to the multiprotein complex Integrator, at least composed of IntS1, IntS2, IntS3, IntS4, omd/IntS5, IntS6, defl/IntS7, IntS8, IntS9, IntS10, IntS11, IntS12, asun/IntS13, IntS14 and IntS15. The core complex associates with protein phosphatase 2A subunits mts/PP2A and Pp2A-29B, to form the Integrator-PP2A (INTAC) complex. Phosphorylated.

It localises to the nucleus. Its subcellular location is the cytoplasm. The protein localises to the perinuclear region. Functionally, component of the integrator complex, a multiprotein complex that terminates RNA polymerase II (Pol II) transcription in the promoter-proximal region of genes. The integrator complex provides a quality checkpoint during transcription elongation by driving premature transcription termination of transcripts that are unfavorably configured for transcriptional elongation: the complex terminates transcription by (1) catalyzing dephosphorylation of the C-terminal domain (CTD) of Pol II subunit Polr2A/Rbp1 and Spt5, and (2) degrading the exiting nascent RNA transcript via endonuclease activity. The integrator complex is also involved in the 3'-end processing of the U7 snRNA, and also the spliceosomal snRNAs U1, U2, U4 and U5. This is Protein asunder (asun) from Drosophila ananassae (Fruit fly).